We begin with the raw amino-acid sequence, 970 residues long: Sodium/calcium exchanger 1 (970 aa).

The signal sequence occupies residues 1 to 32 (MLRLSLPPNVSMGFRLVALVALLFSHVDHITA). Over 33 to 71 (DTEAETGGNETTECTGSYYCKKGVILPIWEPQDPSFGDK) the chain is Extracellular. Residue Asn-41 is glycosylated (N-linked (GlcNAc...) asparagine). The helical transmembrane segment at 72 to 92 (IARATVYFVAMVYMFLGVSII) threads the bilayer. Over 93–133 (ADRFMSSIEVITSQEKEITIKKPNGETTKTTVRIWNETVSN) the chain is Cytoplasmic. A helical membrane pass occupies residues 134–154 (LTLMALGSSAPEILLSVIEVC). The stretch at 138-178 (ALGSSAPEILLSVIEVCGHNFTAGDLGPSTIVGSAAFNMFI) is one Alpha-1 repeat. Over 155 to 167 (GHNFTAGDLGPST) the chain is Extracellular. Asn-157 carries an N-linked (GlcNAc...) asparagine glycan. The helical transmembrane segment at 168–188 (IVGSAAFNMFIIIALCVYVVP) threads the bilayer. Over 189–201 (DGETRKIKHLRVF) the chain is Cytoplasmic. Residues 202-222 (FVTAAWSIFAYTWLYIILSVS) form a helical membrane-spanning segment. At 223-228 (SPGVVE) the chain is on the extracellular side. The helical transmembrane segment at 229-249 (VWEGLLTFFFFPICVVFAWVA) threads the bilayer. The Cytoplasmic portion of the chain corresponds to 250–797 (DRRLLFYKYV…FVPPTEYWNG (548 aa)). The interval 251–270 (RRLLFYKYVYKRYRAGKQRG) is putative calmodulin-binding region. Phosphoserine occurs at positions 282 and 389. 2 Calx-beta domains span residues 393-493 (VNME…VHLS) and 524-624 (ATIT…IEIG). Ca(2+) is bound by residues Glu-417, Asp-453, Asp-478, Asp-479, Ile-481, Glu-483, Glu-486, Asp-530, Asp-531, Asp-532, Glu-548, Asp-584, Asp-610, Glu-611, Glu-612, and Glu-715. Residues 798-818 (WACFIVSILMIGLLTAFIGDL) form a helical membrane-spanning segment. Residues 819–821 (ASH) lie on the Extracellular side of the membrane. The helical transmembrane segment at 822–842 (FGCTIGLKDSVTAVVFVALGT) threads the bilayer. An Alpha-2 repeat occupies 839–875 (ALGTSVPDTFASKVAATQDQYADASIGNVTGSNAVNV). Residues 843–871 (SVPDTFASKVAATQDQYADASIGNVTGSN) are Cytoplasmic-facing. Residues 872 to 892 (AVNVFLGIGVAWSIAAIYHAA) traverse the membrane as a helical segment. The Extracellular portion of the chain corresponds to 893–903 (NGEQFKVSPGT). A helical transmembrane segment spans residues 904–924 (LAFSVTLFTIFAFINVGVLLY). Over 925–941 (RRRPEIGGELGGPRTAK) the chain is Cytoplasmic. Residues 942 to 962 (LLTSSLFVLLWLLYIFFSSLE) form a helical membrane-spanning segment. Topologically, residues 963-970 (AYCHIKGF) are extracellular.

Belongs to the Ca(2+):cation antiporter (CaCA) (TC 2.A.19) family. SLC8 subfamily. As to expression, detected in heart, kidney and brain (at protein level).

The protein localises to the cell membrane. It catalyses the reaction Ca(2+)(in) + 3 Na(+)(out) = Ca(2+)(out) + 3 Na(+)(in). Its activity is regulated as follows. Activated by micromolar levels of Ca(2+). In terms of biological role, mediates the exchange of one Ca(2+) ion against three to four Na(+) ions across the cell membrane, and thereby contributes to the regulation of cytoplasmic Ca(2+) levels and Ca(2+)-dependent cellular processes. Contributes to Ca(2+) transport during excitation-contraction coupling in muscle. In a first phase, voltage-gated channels mediate the rapid increase of cytoplasmic Ca(2+) levels due to release of Ca(2+) stores from the endoplasmic reticulum. SLC8A1 mediates the export of Ca(2+) from the cell during the next phase, so that cytoplasmic Ca(2+) levels rapidly return to baseline. Required for normal embryonic heart development and the onset of heart contractions. This is Sodium/calcium exchanger 1 (Slc8a1) from Mus musculus (Mouse).